A 131-amino-acid polypeptide reads, in one-letter code: Profilin-2 (131 aa).

Residues C13 and C115 are joined by a disulfide bond. The Involved in PIP2 interaction signature appears at A81–T97. Residue T111 is modified to Phosphothreonine.

This sequence belongs to the profilin family. In terms of assembly, occurs in many kinds of cells as a complex with monomeric actin in a 1:1 ratio. Phosphorylated by MAP kinases.

The protein localises to the cytoplasm. It localises to the cytoskeleton. Its function is as follows. Binds to actin and affects the structure of the cytoskeleton. At high concentrations, profilin prevents the polymerization of actin, whereas it enhances it at low concentrations. By binding to PIP2, it inhibits the formation of IP3 and DG. The chain is Profilin-2 (PRO2) from Phleum pratense (Common timothy).